The following is a 373-amino-acid chain: Dual-specificity RNA methyltransferase RlmN (373 aa).

E94 acts as the Proton acceptor in catalysis. Residues 100-339 (EDDRATLCVS…VIVRKTRGDD (240 aa)) form the Radical SAM core domain. Cysteines 107 and 344 form a disulfide. [4Fe-4S] cluster contacts are provided by C114, C118, and C121. S-adenosyl-L-methionine contacts are provided by residues 168 to 169 (GE), S200, 222 to 224 (SIH), and N301. The S-methylcysteine intermediate role is filled by C344.

The protein belongs to the radical SAM superfamily. RlmN family. The cofactor is [4Fe-4S] cluster.

It is found in the cytoplasm. It catalyses the reaction adenosine(2503) in 23S rRNA + 2 reduced [2Fe-2S]-[ferredoxin] + 2 S-adenosyl-L-methionine = 2-methyladenosine(2503) in 23S rRNA + 5'-deoxyadenosine + L-methionine + 2 oxidized [2Fe-2S]-[ferredoxin] + S-adenosyl-L-homocysteine. The catalysed reaction is adenosine(37) in tRNA + 2 reduced [2Fe-2S]-[ferredoxin] + 2 S-adenosyl-L-methionine = 2-methyladenosine(37) in tRNA + 5'-deoxyadenosine + L-methionine + 2 oxidized [2Fe-2S]-[ferredoxin] + S-adenosyl-L-homocysteine. In terms of biological role, specifically methylates position 2 of adenine 2503 in 23S rRNA and position 2 of adenine 37 in tRNAs. m2A2503 modification seems to play a crucial role in the proofreading step occurring at the peptidyl transferase center and thus would serve to optimize ribosomal fidelity. In Shewanella baltica (strain OS185), this protein is Dual-specificity RNA methyltransferase RlmN.